The sequence spans 149 residues: Transcription antitermination protein NusB (149 aa).

The protein belongs to the NusB family.

Functionally, involved in transcription antitermination. Required for transcription of ribosomal RNA (rRNA) genes. Binds specifically to the boxA antiterminator sequence of the ribosomal RNA (rrn) operons. This is Transcription antitermination protein NusB from Sphingopyxis alaskensis (strain DSM 13593 / LMG 18877 / RB2256) (Sphingomonas alaskensis).